A 354-amino-acid polypeptide reads, in one-letter code: MKIKEITIWKEDLALTRPYTIAYETISAVENVFVLLETDNGITGIGAGSPAEDVTGETITATETALSLKLAPILQGKDIRSCFSLLKELNTALADTPAALAAADIALHDLAAKTMGLPLVDLLGRVHDRLPTSITIGIMPVKETLAEAEEYLGRGFSILKIKTGLNVEEDIERIIRLNETFKSKICMRVDANQGYEVEELHHFFKKTVGLVEFIEQPLKAEHLEKMGQLPQAIRRVSAADETLLGPRDAAQMLHAPRPFGIFNIKLMKCGGIAPGLEIANMAGHADIDLMWGCMDESIVSIAGALHAAFSSRATRYLDLDGSLDLARDIVNGGFILENGWMRTTDQPGLGVKRI.

Substrate is bound by residues Thr135 and 160 to 162; that span reads KIK. Mg(2+) contacts are provided by Asp190, Glu215, and Asp240. Residues Lys265, Asp295, and 318–320 each bind substrate; that span reads DLD.

Belongs to the mandelate racemase/muconate lactonizing enzyme family. Mg(2+) serves as cofactor.

Functionally, catalyzes the epimerization of L-Lys-L-Arg to L-Lys-D-Arg (in vitro). Catalyzes the epimerization of positively charged dipeptides, with a preference for substrates with a basic amino acid in the second position. Has epimerase activity with L-Lys-L-Lys, L-Arg-L-Arg, L-Val-L-Arg, L-Val-L-Lys and L-Ala-L-Arg (in vitro). The protein is L-Lys-D/L-Arg epimerase of Desulforapulum autotrophicum (strain ATCC 43914 / DSM 3382 / VKM B-1955 / HRM2) (Desulfobacterium autotrophicum).